The following is a 542-amino-acid chain: CTP synthase (542 aa).

Positions methionine 1–isoleucine 265 are amidoligase domain. Residue serine 13 coordinates CTP. UTP is bound at residue serine 13. ATP contacts are provided by residues serine 14 to isoleucine 19 and aspartate 71. Mg(2+)-binding residues include aspartate 71 and glutamate 139. Residues aspartate 146 to glutamate 148, lysine 186 to glutamine 191, and lysine 222 each bind CTP. Residues lysine 186–glutamine 191 and lysine 222 each bind UTP. A Glutamine amidotransferase type-1 domain is found at threonine 291–leucine 541. An L-glutamine-binding site is contributed by glycine 353. Residue cysteine 380 is the Nucleophile; for glutamine hydrolysis of the active site. Residues phenylalanine 381–glutamine 384, glutamate 404, and arginine 469 contribute to the L-glutamine site. Catalysis depends on residues histidine 514 and glutamate 516.

The protein belongs to the CTP synthase family. In terms of assembly, homotetramer.

It carries out the reaction UTP + L-glutamine + ATP + H2O = CTP + L-glutamate + ADP + phosphate + 2 H(+). The enzyme catalyses L-glutamine + H2O = L-glutamate + NH4(+). The catalysed reaction is UTP + NH4(+) + ATP = CTP + ADP + phosphate + 2 H(+). Its pathway is pyrimidine metabolism; CTP biosynthesis via de novo pathway; CTP from UDP: step 2/2. With respect to regulation, allosterically activated by GTP, when glutamine is the substrate; GTP has no effect on the reaction when ammonia is the substrate. The allosteric effector GTP functions by stabilizing the protein conformation that binds the tetrahedral intermediate(s) formed during glutamine hydrolysis. Inhibited by the product CTP, via allosteric rather than competitive inhibition. Catalyzes the ATP-dependent amination of UTP to CTP with either L-glutamine or ammonia as the source of nitrogen. Regulates intracellular CTP levels through interactions with the four ribonucleotide triphosphates. The sequence is that of CTP synthase from Rhizobium johnstonii (strain DSM 114642 / LMG 32736 / 3841) (Rhizobium leguminosarum bv. viciae).